Here is a 472-residue protein sequence, read N- to C-terminus: Pentatricopeptide repeat-containing protein At5g46100 (472 aa).

PPR repeat units lie at residues 50 to 84 (DQSS…NCVV), 85 to 119 (SEDI…DCDP), 120 to 154 (SQKA…GLPP), 155 to 190 (TVAS…GCDP), 191 to 225 (DSYT…DCAP), 226 to 260 (TVVT…GIEP), 261 to 295 (NVFT…GCRP), 296 to 330 (NMVT…GLKP), 331 to 365 (DAGL…GITP), 373 to 406 (HVKT…GISV), and 407 to 441 (EVET…GCIP).

The protein belongs to the PPR family. P subfamily.

This Arabidopsis thaliana (Mouse-ear cress) protein is Pentatricopeptide repeat-containing protein At5g46100.